Here is a 393-residue protein sequence, read N- to C-terminus: Cysteine desulfurase (393 aa).

Residues Gly76–Thr77, Asn155, Gln183, and Ser203–His205 each bind pyridoxal 5'-phosphate. The residue at position 206 (Lys206) is an N6-(pyridoxal phosphate)lysine. Position 241 (Thr241) interacts with pyridoxal 5'-phosphate. The active-site Cysteine persulfide intermediate is the Cys328. A [2Fe-2S] cluster-binding site is contributed by Cys328.

It belongs to the class-V pyridoxal-phosphate-dependent aminotransferase family. NifS/IscS subfamily. Homodimer. It depends on pyridoxal 5'-phosphate as a cofactor.

The enzyme catalyses (sulfur carrier)-H + L-cysteine = (sulfur carrier)-SH + L-alanine. Catalyzes the removal of elemental sulfur atoms from cysteine to produce alanine. Seems to participate in the biosynthesis of the nitrogenase metalloclusters by providing the inorganic sulfur required for the Fe-S core formation. This chain is Cysteine desulfurase, found in Bradyrhizobium diazoefficiens (strain JCM 10833 / BCRC 13528 / IAM 13628 / NBRC 14792 / USDA 110).